The sequence spans 681 residues: Oligopeptidase A (681 aa).

A Zn(2+)-binding site is contributed by His470. Glu471 is an active-site residue. The Zn(2+) site is built by His474 and His477.

This sequence belongs to the peptidase M3 family. Zn(2+) is required as a cofactor.

It carries out the reaction Hydrolysis of oligopeptides, with broad specificity. Gly or Ala commonly occur as P1 or P1' residues, but more distant residues are also important, as is shown by the fact that Z-Gly-Pro-Gly-|-Gly-Pro-Ala is cleaved, but not Z-(Gly)(5).. May play a specific role in the degradation of signal peptides after they are released from precursor forms of secreted proteins. Can cleave N-acetyl-L-Ala(4). The chain is Oligopeptidase A (prlC) from Haemophilus influenzae (strain ATCC 51907 / DSM 11121 / KW20 / Rd).